The primary structure comprises 339 residues: DNA-directed RNA polymerase subunit alpha (339 aa).

The interval 1–235 (MVIQKNWQEL…DQLQIFVNFE (235 aa)) is alpha N-terminal domain (alpha-NTD). The segment at 251-339 (FNPALLKKVD…DLAKRFEEHY (89 aa)) is alpha C-terminal domain (alpha-CTD).

It belongs to the RNA polymerase alpha chain family. As to quaternary structure, homodimer. The RNAP catalytic core consists of 2 alpha, 1 beta, 1 beta' and 1 omega subunit. When a sigma factor is associated with the core the holoenzyme is formed, which can initiate transcription.

The catalysed reaction is RNA(n) + a ribonucleoside 5'-triphosphate = RNA(n+1) + diphosphate. Functionally, DNA-dependent RNA polymerase catalyzes the transcription of DNA into RNA using the four ribonucleoside triphosphates as substrates. This chain is DNA-directed RNA polymerase subunit alpha, found in Methylobacterium sp. (strain 4-46).